Here is a 230-residue protein sequence, read N- to C-terminus: Claudin-2 (230 aa).

The Cytoplasmic segment spans residues 1 to 7; the sequence is MASLGLQ. The chain crosses the membrane as a helical span at residues 8 to 28; the sequence is LVGYVLGLLGLLGTVIAMLLP. Over 29-81 the chain is Extracellular; the sequence is SWRTSSYVGASIVTAVGFSKGLWMECATHSTGITQCDIYSTMLGLPADIQAAQ. A disulfide bridge connects residues C54 and C64. A helical membrane pass occupies residues 82–102; sequence AMMVTSSAMSSLACIVSVVGM. Topologically, residues 103–116 are cytoplasmic; sequence RCTVFFQESRAKDR. The helical transmembrane segment at 117–137 threads the bilayer; that stretch reads VAVVGGVFFILGGLLGFIPVA. Topologically, residues 138-162 are extracellular; the sequence is WNLHGILRDFYSPLVPDSMKFEIGE. Residues 163–183 form a helical membrane-spanning segment; it reads ALYLGIISSLFSLIAGIFLCF. The Cytoplasmic segment spans residues 184-230; the sequence is SCSPQGNRSNYYDAYQAQPLATRSSPRPGQAPKGKSEFNSYSLTGYV. The interval 205-230 is disordered; the sequence is TRSSPRPGQAPKGKSEFNSYSLTGYV. Residue K218 forms a Glycyl lysine isopeptide (Lys-Gly) (interchain with G-Cter in SUMO) linkage. Residues S219 and S223 each carry the phosphoserine modification. Over residues 220 to 230 the composition is skewed to polar residues; that stretch reads EFNSYSLTGYV. Positions 229–230 are interaction with TJP1, TJP2 and TJP3; that stretch reads YV.

Belongs to the claudin family. In terms of assembly, can form homo- and heteropolymers with other claudins to mediate paracellular barrier and channel functions of tight junctions in response to physiological stimuli. Homopolymers interact with CLDN3, but not CLDN1, homopolymers. Directly interacts with TJP1/ZO-1, TJP2/ZO-2 and TJP3/ZO-3. The disulfide bond is necessary for pore formation, but is not required for correct protein trafficking.

It localises to the cell junction. The protein localises to the tight junction. The protein resides in the cell membrane. It catalyses the reaction Na(+)(in) = Na(+)(out). The enzyme catalyses K(+)(in) = K(+)(out). It carries out the reaction Rb(+)(in) = Rb(+)(out). The catalysed reaction is Li(+)(in) = Li(+)(out). It catalyses the reaction Cs(+)(in) = Cs(+)(out). The enzyme catalyses Ca(2+)(in) = Ca(2+)(out). It carries out the reaction methylamine(out) = methylamine(in). The catalysed reaction is choline(out) = choline(in). It catalyses the reaction H2O(in) = H2O(out). In terms of biological role, forms paracellular channels: polymerizes in tight junction strands with cation- and water-selective channels through the strands, conveying epithelial permeability in a process known as paracellular tight junction permeability. In intestinal epithelium, allows for sodium and water fluxes from the peritoneal side to the lumen of the intestine to regulate nutrient absorption and clear enteric pathogens as part of mucosal immune response. In kidney, allows passive sodium and calcium reabsorption across proximal tubules from the lumen back to the bloodstream. In the hepatobiliary tract, allows paracellular water and cation fluxes in the hepatic perivenous areas and biliary epithelium to generate bile flow and maintain osmotic gradients. This chain is Claudin-2 (CLDN2), found in Bos taurus (Bovine).